An 83-amino-acid polypeptide reads, in one-letter code: Hainantoxin-III 4 (83 aa).

The signal sequence occupies residues 1-21 (MKASMYLALAGLVLLFVVGYA). Residues 22–48 (SESEEKEFPRELLSKIFAVDDFKGKER) constitute a propeptide that is removed on maturation. 3 disulfides stabilise this stretch: C50-C65, C57-C70, and C64-C77. At L81 the chain carries Leucine amide.

It belongs to the neurotoxin 10 (Hwtx-1) family. 15 (Hntx-3) subfamily. Monomer. As to expression, expressed by the venom gland.

The protein resides in the secreted. Selective antagonist of neuronal tetrodotoxin (TTX)-sensitive voltage-gated sodium channels (IC(50)=1270 nM on Nav1.1/SCN1A, 270 nM on Nav1.2/SCN2A, 491 nM on Nav1.3/SCN3A and 232 nM on Nav1.7/SCN9A). This toxin suppress Nav1.7 current amplitude without significantly altering the activation, inactivation, and repriming kinetics. Short extreme depolarizations partially activate the toxin-bound channel, indicating voltage-dependent inhibition of this toxin. This toxin increases the deactivation of the Nav1.7 current after extreme depolarizations. The toxin-Nav1.7 complex is gradually dissociated upon prolonged strong depolarizations in a voltage-dependent manner, and the unbound toxin rebinds to Nav1.7 after a long repolarization. Moreover, analysis of chimeric channels showed that the DIIS3-S4 linker is critical for toxin binding to Nav1.7. These data are consistent with this toxin interacting with Nav1.7 site 4 and trapping the domain II voltage sensor in the closed state. The sequence is that of Hainantoxin-III 4 from Cyriopagopus hainanus (Chinese bird spider).